A 553-amino-acid polypeptide reads, in one-letter code: Cytokine-like nuclear factor N-PAC (553 aa).

Positions 8 to 66 constitute a PWWP domain; the sequence is LGDLVWGKLGRYPPWPGKIVNPPKDLKKPRGKKCFFVKFFGTEDHAWIKVEQLKPYHAH. 2 stretches are compositionally biased toward basic and acidic residues: residues 92 to 145 and 162 to 182; these read RAKG…EGKK and RAQE…KDLT. Residues 92 to 188 are disordered; it reads RAKGKDQTSS…KDLTIPESST (97 aa). Ser-130 carries the post-translational modification Phosphoserine. Lys-135 is covalently cross-linked (Glycyl lysine isopeptide (Lys-Gly) (interchain with G-Cter in SUMO2)). Ser-167 is modified (phosphoserine). A DNA-binding region (a.T hook) is located at residues 168 to 180; it reads PRKRGRPPKDEKD. Glycyl lysine isopeptide (Lys-Gly) (interchain with G-Cter in SUMO2) cross-links involve residues Lys-176, Lys-179, Lys-201, and Lys-211. An interaction with histone H3 region spans residues 214 to 217; sequence DPHF. The interval 216–225 is interaction with KDM1B; that stretch reads HFHHFLLSQT. Glycyl lysine isopeptide (Lys-Gly) (interchain with G-Cter in SUMO2) cross-links involve residues Lys-227, Lys-237, Lys-240, and Lys-269. The interval 261-553 is dehydrogenase domain; it reads GSITPTDKKI…MSAVYRAYIH (293 aa). Residue 271 to 285 coordinates NAD(+); it reads GFLGLGLMGSGIVSN. Residue Lys-302 forms a Glycyl lysine isopeptide (Lys-Gly) (interchain with G-Cter in SUMO2) linkage. NAD(+)-binding residues include Thr-362 and Lys-505. A Phosphoserine modification is found at Ser-540.

This sequence belongs to the HIBADH-related family. NP60 subfamily. As to quaternary structure, homotetramere. Interacts with MAPK14. Interacts with KDM1B at nucleosomes; this interaction stimulates H3K4me1 and H3K4me2 demethylation. Binds to mononucleosomes. Interacts with GATA4; the interaction is required for a synergistic activation of GATA4 target genes transcription.

The protein localises to the nucleus. The protein resides in the chromosome. Functionally, cytokine-like nuclear factor with chromatin gene reader activity involved in chromatin modification and regulation of gene expression. Acts as a nucleosome-destabilizing factor that is recruited to genes during transcriptional activation. Recognizes and binds histone H3 without a preference for specific epigenetic markers and also binds DNA. Interacts with KDM1B and promotes its histone demethylase activity by facilitating the capture of H3 tails, they form a multifunctional enzyme complex that modifies transcribed chromatin and facilitates Pol II transcription through nucleosomes. Stimulates the acetylation of 'Lys-56' of nucleosomal histone H3 (H3K56ac) by EP300. With GATA4, co-binds a defined set of heart development genes and coregulates their expression during cardiomyocyte differentiation. Regulates p38 MAP kinase activity by mediating stress activation of MAPK14/p38alpha and specifically regulating MAPK14 signaling. Indirectly promotes phosphorylation of MAPK14 and activation of ATF2. The phosphorylation of MAPK14 requires upstream activity of MAP2K4 and MAP2K6. The chain is Cytokine-like nuclear factor N-PAC from Homo sapiens (Human).